We begin with the raw amino-acid sequence, 82 residues long: Lectin-D2 (82 aa).

Chitin-binding type-1 domains lie at 1-42 (APEC…QCDY) and 43-82 (WRCGRDFGGRLCEEDMCCSKYGWCGYSDDHCEDGCQSQCD). Cystine bridges form between C4–C19, C13–C25, C18–C32, and C36–C40. A carbohydrate is bound by residues S20, W22, Y24, and Y31. W43 is a binding site for a carbohydrate. 4 disulfide bridges follow: C45–C60, C54–C66, C59–C73, and C77–C81. A carbohydrate is bound by residues S61, Y63, W65, and H72.

As to quaternary structure, monomer.

N-acetyl-D-glucosamine binding lectin. Shows no hemagglutinating activity towards rabbit erythrocytes and weak activity towards trypsin-treated erythrocytes. Has mitogenic activity towards human peripheral blood lymphocytes (HPBL). This chain is Lectin-D2, found in Phytolacca americana (American pokeweed).